Reading from the N-terminus, the 308-residue chain is Aspartate carbamoyltransferase catalytic subunit (308 aa).

Carbamoyl phosphate-binding residues include arginine 57 and threonine 58. L-aspartate is bound at residue lysine 86. Positions 107, 135, and 138 each coordinate carbamoyl phosphate. L-aspartate contacts are provided by arginine 168 and arginine 229. Carbamoyl phosphate contacts are provided by leucine 268 and proline 269.

This sequence belongs to the aspartate/ornithine carbamoyltransferase superfamily. ATCase family. As to quaternary structure, heterooligomer of catalytic and regulatory chains.

It catalyses the reaction carbamoyl phosphate + L-aspartate = N-carbamoyl-L-aspartate + phosphate + H(+). Its pathway is pyrimidine metabolism; UMP biosynthesis via de novo pathway; (S)-dihydroorotate from bicarbonate: step 2/3. Its function is as follows. Catalyzes the condensation of carbamoyl phosphate and aspartate to form carbamoyl aspartate and inorganic phosphate, the committed step in the de novo pyrimidine nucleotide biosynthesis pathway. In Pyrococcus furiosus (strain ATCC 43587 / DSM 3638 / JCM 8422 / Vc1), this protein is Aspartate carbamoyltransferase catalytic subunit.